The sequence spans 212 residues: F420-dependent NADP reductase (212 aa).

Residues 9–12, 31–32, K36, I72, H76, V98, and A137 each bind NADP(+); these read TGNL and SR. L207 lines the coenzyme F420-(gamma-Glu)n pocket.

It belongs to the F420-dependent NADP reductase family. In terms of assembly, homodimer.

It carries out the reaction reduced coenzyme F420-(gamma-L-Glu)(n) + NADP(+) = oxidized coenzyme F420-(gamma-L-Glu)(n) + NADPH + 2 H(+). Its function is as follows. Catalyzes the reversible reduction of NADP(+) by F420H(2). In this reaction the proS hydrogen at C5 of F420 is transferred into the proS position at C4 of NADPH. This Archaeoglobus fulgidus (strain ATCC 49558 / DSM 4304 / JCM 9628 / NBRC 100126 / VC-16) protein is F420-dependent NADP reductase (fno).